The sequence spans 548 residues: Chaperonin GroEL (548 aa).

Residues 29–32 (TLGP), 86–90 (DGTTT), glycine 413, 476–478 (NAL), and aspartate 492 each bind ATP. Residues 522 to 531 (PDEDDNDDGD) show a composition bias toward acidic residues. Residues 522 to 548 (PDEDDNDDGDMGGGAPGMGGMGGMPGM) are disordered. Positions 532–548 (MGGGAPGMGGMGGMPGM) are enriched in gly residues.

This sequence belongs to the chaperonin (HSP60) family. Forms a cylinder of 14 subunits composed of two heptameric rings stacked back-to-back. Interacts with the co-chaperonin GroES.

It is found in the cytoplasm. It catalyses the reaction ATP + H2O + a folded polypeptide = ADP + phosphate + an unfolded polypeptide.. In terms of biological role, together with its co-chaperonin GroES, plays an essential role in assisting protein folding. The GroEL-GroES system forms a nano-cage that allows encapsulation of the non-native substrate proteins and provides a physical environment optimized to promote and accelerate protein folding. The chain is Chaperonin GroEL from Natranaerobius thermophilus (strain ATCC BAA-1301 / DSM 18059 / JW/NM-WN-LF).